Consider the following 450-residue polypeptide: Phosphoglucosamine mutase (450 aa).

The active-site Phosphoserine intermediate is the Ser102. Mg(2+) contacts are provided by Ser102, Asp244, Asp246, and Asp248. Ser102 is subject to Phosphoserine.

It belongs to the phosphohexose mutase family. Mg(2+) is required as a cofactor. In terms of processing, activated by phosphorylation.

The catalysed reaction is alpha-D-glucosamine 1-phosphate = D-glucosamine 6-phosphate. Functionally, catalyzes the conversion of glucosamine-6-phosphate to glucosamine-1-phosphate. In Desulfovibrio desulfuricans (strain ATCC 27774 / DSM 6949 / MB), this protein is Phosphoglucosamine mutase.